We begin with the raw amino-acid sequence, 3163 residues long: Genome polyprotein (3163 aa).

One can recognise a Peptidase S30 domain in the interval 219 to 362 (KMSDQGVDML…KTMSLKIVHF (144 aa)). Active-site for P1 proteinase activity residues include His-270, Asp-279, and Ser-313. An Involved in interaction with stylet and aphid transmission motif is present at residues 414-417 (KITC). The short motif at 672-674 (PTK) is the Involved in virions binding and aphid transmission element. Residues 698 to 820 (MYIAKEGYCY…ESSLKHYRVG (123 aa)) enclose the Peptidase C6 domain. Catalysis depends on for helper component proteinase activity residues Cys-706 and His-779. Residues 1300–1452 (KIAHESDKDI…TQYPVSISTE (153 aa)) form the Helicase ATP-binding domain. 1313 to 1320 (GAVGSGKS) contacts ATP. The short motif at 1402-1405 (DECH) is the DEAH box element. Residues 1471 to 1630 (DVISKGDNIL…GLPVITNNVS (160 aa)) enclose the Helicase C-terminal domain. Residues 1871-1888 (STNEMSKFLQLKGKWNKT) are Cytoplasmic-facing. A helical transmembrane segment spans residues 1889–1909 (LITRDVLVICGVLGGGVWMVV). Residues 1910-1923 (QHFRSKVSEPVTHE) are Lumenal-facing. Positions 1964-1971 (KKGKSKGR) match the Nuclear localization signal motif. The segment at 1983–2017 (INMYGFDPEDFSAVRFVDPLTGATLDDNPFTDITL) is binding to host eIF(iso)4E. Position 1986 is an O-(5'-phospho-RNA)-tyrosine (Tyr-1986). In terms of domain architecture, Peptidase C4 spans 2116-2334 (SNSMFRGLRD…ISWGSLNIQA (219 aa)). Residues His-2161, Asp-2196, and Cys-2266 each act as for nuclear inclusion protein A activity in the active site. The RdRp catalytic domain occupies 2600–2724 (WVYCDADGSQ…SVHPEYEYIL (125 aa)). The interval 2883 to 2934 (DLTEEQKQAEKEKKEREKAEKERERQKQLAFKKGKDVAQEEGKRDKEVNAGT) is disordered. Over residues 2886–2930 (EEQKQAEKEKKEREKAEKERERQKQLAFKKGKDVAQEEGKRDKEV) the composition is skewed to basic and acidic residues.

This sequence belongs to the potyviridae genome polyprotein family. Interacts with host eIF4E protein (via cap-binding region); this interaction mediates the translation of the VPg-viral RNA conjugates. Part of a complex that comprises VPg, RNA, host EIF4E and EIF4G; this interaction mediates the translation of the VPg-viral RNA conjugates. As to quaternary structure, interacts, via N-terminal region, with host Sec24a protein in COPII-coated vesicles. This binding triggers the formation of host endoplasmic reticulum (ER)-derived viral vesicles involved in cell-to-cell viral movement. Post-translationally, VPg is uridylylated by the polymerase and is covalently attached to the 5'-end of the genomic RNA. This uridylylated form acts as a nucleotide-peptide primer for the polymerase. Potyviral RNA is expressed as two polyproteins which undergo post-translational proteolytic processing. Genome polyprotein is processed by NIa-pro, P1 and HC-pro proteinases resulting in the production of at least ten individual proteins. P3N-PIPO polyprotein is cleaved by P1 and HC-pro proteinases resulting in the production of three individual proteins. The P1 proteinase and the HC-pro cleave only their respective C-termini autocatalytically. 6K1 is essential for proper proteolytic separation of P3 from CI.

The protein resides in the host cytoplasm. It is found in the host nucleus. The protein localises to the host cytoplasmic vesicle. It localises to the host membrane. Its subcellular location is the virion. It carries out the reaction RNA(n) + a ribonucleoside 5'-triphosphate = RNA(n+1) + diphosphate. It catalyses the reaction Hydrolyzes glutaminyl bonds, and activity is further restricted by preferences for the amino acids in P6 - P1' that vary with the species of potyvirus, e.g. Glu-Xaa-Xaa-Tyr-Xaa-Gln-|-(Ser or Gly) for the enzyme from tobacco etch virus. The natural substrate is the viral polyprotein, but other proteins and oligopeptides containing the appropriate consensus sequence are also cleaved.. The catalysed reaction is Hydrolyzes a Gly-|-Gly bond at its own C-terminus, commonly in the sequence -Tyr-Xaa-Val-Gly-|-Gly, in the processing of the potyviral polyprotein.. Cysteine protease that cleaves a Gly-Gly dipeptide at its own C-terminus. Required for aphid transmission and also has proteolytic activity. Interacts with virions and aphid stylets. Acts as a suppressor of RNA-mediated gene silencing, also known as post-transcriptional gene silencing (PTGS), a mechanism of plant viral defense that limits the accumulation of viral RNAs. May have RNA-binding activity. Its function is as follows. Has helicase activity. It may be involved in replication. Functionally, indispensable for virus replication. In terms of biological role, responsible for the formation of peripheral motile host endoplasmic reticulum (ER)-derived viral vesicles called 'viral factories', seat of the viral RNA (vRNA) replication and carrying vRNA to plasmodesmata for delivery into adjacent non-infected cells; this process relies on host Sec24a-binding. Mediates the cap-independent, EIF4E-dependent translation of viral genomic RNAs. Binds to the cap-binding site of host EIF4E and thus interferes with the host EIF4E-dependent mRNA export and translation. VPg-RNA directly binds EIF4E and is a template for transcription. Also forms trimeric complexes with EIF4E-EIF4G, which are templates for translation. Its function is as follows. Has RNA-binding and proteolytic activities. Functionally, RNA-dependent RNA polymerase that ensures transcription and replication of viral RNA (vRNA). In terms of biological role, involved in aphid transmission, cell-to-cell and systemis movement, encapsidation of the viral RNA and in the regulation of viral RNA amplification. The polypeptide is Genome polyprotein (Brassica (TuMV)).